We begin with the raw amino-acid sequence, 466 residues long: Clusterin-like protein 1 (466 aa).

A signal peptide spans 1–20 (MKPPLLVFIVCLLWLKDSHC). Residues 57 to 111 (KQMKIMMERKEKEHTNLMSTLKKCREEKQEALKLLNEVQEHLEEEERLCRESLAD) adopt a coiled-coil conformation. Cystine bridges form between Cys-105–Cys-333, Cys-116–Cys-325, Cys-119–Cys-322, Cys-124–Cys-315, and Cys-131–Cys-305. Asn-196, Asn-257, Asn-311, Asn-351, Asn-412, and Asn-431 each carry an N-linked (GlcNAc...) asparagine glycan.

This sequence belongs to the clusterin family.

The protein localises to the secreted. The protein is Clusterin-like protein 1 (CLUL1) of Homo sapiens (Human).